We begin with the raw amino-acid sequence, 172 residues long: Stellate protein CG33237 (172 aa).

Belongs to the casein kinase 2 subunit beta family. In terms of assembly, interacts in vitro with the casein kinase 2 alpha subunit (CkII-alpha). The relevance of such interaction is however unclear in vivo. As to expression, probably not expressed in wild-type flies. In males lacking the Y chromosome, it is testis-specific and constitutes the main component of star-shaped crystals.

Unknown. In males lacking the Y chromosome, its strong overexpression leads to the appearance of proteinaceous star-shaped crystals in the primary spermatocytes causing meiotic drive, possibly by interfering with normal casein kinase 2 activity. The sequence is that of Stellate protein CG33237 (Ste:CG33237) from Drosophila melanogaster (Fruit fly).